A 157-amino-acid chain; its full sequence is DNA gyrase inhibitor (157 aa).

This sequence belongs to the DNA gyrase inhibitor family. Interacts with DNA gyrase.

Its subcellular location is the cytoplasm. Functionally, inhibits the supercoiling activity of DNA gyrase. Acts by inhibiting DNA gyrase at an early step, prior to (or at the step of) binding of DNA by the gyrase. It protects cells against toxins that target DNA gyrase, by inhibiting activity of these toxins and reducing the formation of lethal double-strand breaks in the cell. This Shigella boydii serotype 18 (strain CDC 3083-94 / BS512) protein is DNA gyrase inhibitor.